The chain runs to 164 residues: Large ribosomal subunit protein eL24z (164 aa).

A compositionally biased stretch (basic and acidic residues) spans 117 to 133; sequence ERIKKTKDEKKAKKVEY. A disordered region spans residues 117 to 164; that stretch reads ERIKKTKDEKKAKKVEYASKQQKSQVKGNIPKSAAPKAAKMGGGGGRR.

The protein belongs to the eukaryotic ribosomal protein eL24 family. Interacts with the cauliflower mosaic virus transactivator TAV to form a TAV/60S complex. Interacts with REIL1 AND REIL2.

Functionally, might have an extraribosomal function in reinitiation of translation. This chain is Large ribosomal subunit protein eL24z (RPL24A), found in Arabidopsis thaliana (Mouse-ear cress).